We begin with the raw amino-acid sequence, 226 residues long: Urease accessory protein UreG (226 aa).

Positions 1–26 (MPPHFLDGQPHGHTDRPRRVRQPGEP) are disordered. Position 33–40 (33–40 (GPVGSGKT)) interacts with GTP.

The protein belongs to the SIMIBI class G3E GTPase family. UreG subfamily. In terms of assembly, homodimer. UreD, UreF and UreG form a complex that acts as a GTP-hydrolysis-dependent molecular chaperone, activating the urease apoprotein by helping to assemble the nickel containing metallocenter of UreC. The UreE protein probably delivers the nickel.

The protein resides in the cytoplasm. In terms of biological role, facilitates the functional incorporation of the urease nickel metallocenter. This process requires GTP hydrolysis, probably effectuated by UreG. The polypeptide is Urease accessory protein UreG (Mycolicibacterium vanbaalenii (strain DSM 7251 / JCM 13017 / BCRC 16820 / KCTC 9966 / NRRL B-24157 / PYR-1) (Mycobacterium vanbaalenii)).